The chain runs to 94 residues: ESAT-6-like protein EsxI (94 aa).

It belongs to the WXG100 family. ESAT-6 subfamily.

It localises to the secreted. The sequence is that of ESAT-6-like protein EsxI from Mycobacterium tuberculosis (strain CDC 1551 / Oshkosh).